A 102-amino-acid chain; its full sequence is PqqA binding protein (102 aa).

The protein belongs to the PqqD family. In terms of assembly, monomer. Interacts with PqqE.

The protein operates within cofactor biosynthesis; pyrroloquinoline quinone biosynthesis. Its function is as follows. Functions as a PqqA binding protein and presents PqqA to PqqE, in the pyrroloquinoline quinone (PQQ) biosynthetic pathway. This is PqqA binding protein from Rhodopseudomonas palustris (strain TIE-1).